Consider the following 267-residue polypeptide: Hydroxyethylthiazole kinase (267 aa).

M42 serves as a coordination point for substrate. Residues R118 and S164 each coordinate ATP. A191 contacts substrate.

Belongs to the Thz kinase family. Requires Mg(2+) as cofactor.

The enzyme catalyses 5-(2-hydroxyethyl)-4-methylthiazole + ATP = 4-methyl-5-(2-phosphooxyethyl)-thiazole + ADP + H(+). The protein operates within cofactor biosynthesis; thiamine diphosphate biosynthesis; 4-methyl-5-(2-phosphoethyl)-thiazole from 5-(2-hydroxyethyl)-4-methylthiazole: step 1/1. In terms of biological role, catalyzes the phosphorylation of the hydroxyl group of 4-methyl-5-beta-hydroxyethylthiazole (THZ). This is Hydroxyethylthiazole kinase from Pasteurella multocida (strain Pm70).